Reading from the N-terminus, the 762-residue chain is cGMP-dependent protein kinase 2 (762 aa).

Residues 1–26 form a disordered region; sequence MGNGSVKPKHAKHPDGHSGNLSNEAL. A lipid anchor (N-myristoyl glycine) is attached at G2. 2 positions are modified to phosphoserine: S110 and S117. Residues 118 to 138 form a disordered region; the sequence is RRGAKAGVSAEPTTRTYDLNK. Positions 168-283 are cGMP-binding, high affinity; cAMP-binding, moderate affinity; it reads FLKRLDPQQI…DEEYRNFLRS (116 aa). Residues 232-235, 242-243, K347, 356-359, 366-367, D412, and R415 contribute to the 3',5'-cyclic GMP site; these read GELA, RT, GEKA, and RS. Positions 286-416 are cGMP-binding, high affinity; cAMP-binding, low affinity; sequence LLKNLPEDKL…TLNRDDEKRH (131 aa). S431 is subject to Phosphoserine. The Protein kinase domain maps to 453–711; that stretch reads LEIIATLGVG…INDIKKHRWL (259 aa). Residues 459–467 and K482 contribute to the ATP site; that span reads LGVGGFGRV. D576 serves as the catalytic Proton acceptor. T609 is modified (phosphothreonine). The AGC-kinase C-terminal domain maps to 712–762; it reads NGFNWEGLKARSLPSPLRRELSGPIDHSYFDKYPPEKGVPPDEMSGWDKDF. A disordered region spans residues 740–762; that stretch reads YFDKYPPEKGVPPDEMSGWDKDF.

This sequence belongs to the protein kinase superfamily. AGC Ser/Thr protein kinase family. cGMP subfamily. In terms of assembly, interacts with GRIA1/GLUR1. Myristoylation mediates membrane localization.

It is found in the apical cell membrane. The protein resides in the cell membrane. It catalyses the reaction L-seryl-[protein] + ATP = O-phospho-L-seryl-[protein] + ADP + H(+). It carries out the reaction L-threonyl-[protein] + ATP = O-phospho-L-threonyl-[protein] + ADP + H(+). With respect to regulation, binding of cGMP results in enzyme activation. Its function is as follows. Crucial regulator of intestinal secretion and bone growth. Phosphorylates and activates CFTR on the plasma membrane. Plays a key role in intestinal secretion by regulating cGMP-dependent translocation of CFTR in jejunum. Acts downstream of NMDAR to activate the plasma membrane accumulation of GRIA1/GLUR1 in synapse and increase synaptic plasticity. Phosphorylates GRIA1/GLUR1 at Ser-863. Acts as a regulator of gene expression and activator of the extracellular signal-regulated kinases MAPK3/ERK1 and MAPK1/ERK2 in mechanically stimulated osteoblasts. Under fluid shear stress, mediates ERK activation and subsequent induction of FOS, FOSL1/FRA1, FOSL2/FRA2 and FOSB that play a key role in the osteoblast anabolic response to mechanical stimulation. The protein is cGMP-dependent protein kinase 2 (Prkg2) of Mus musculus (Mouse).